We begin with the raw amino-acid sequence, 419 residues long: uncharacterized protein (419 aa).

11 consecutive transmembrane segments (helical) span residues Met-1–Leu-21, Val-24–Asp-44, Ile-66–Thr-86, Ala-101–Ile-121, Ser-174–Ala-194, Asn-216–Leu-236, Ile-242–Gly-262, Pro-280–Leu-300, Ser-311–Ala-331, Leu-349–Phe-369, and Ile-396–Val-416.

The protein belongs to the CitM (TC 2.A.11) transporter family.

It localises to the cell membrane. This is an uncharacterized protein from Haemophilus influenzae (strain ATCC 51907 / DSM 11121 / KW20 / Rd).